Here is a 332-residue protein sequence, read N- to C-terminus: Ferredoxin--NADP reductase 2 (332 aa).

Glu37, Gln45, Tyr50, Val90, Phe124, Asp285, and Thr326 together coordinate FAD.

Belongs to the ferredoxin--NADP reductase type 2 family. As to quaternary structure, homodimer. FAD is required as a cofactor.

It catalyses the reaction 2 reduced [2Fe-2S]-[ferredoxin] + NADP(+) + H(+) = 2 oxidized [2Fe-2S]-[ferredoxin] + NADPH. This chain is Ferredoxin--NADP reductase 2 (yumC), found in Bacillus subtilis (strain 168).